A 245-amino-acid chain; its full sequence is tRNA pseudouridine synthase A (245 aa).

The Nucleophile role is filled by aspartate 52. Tyrosine 112 is a substrate binding site.

This sequence belongs to the tRNA pseudouridine synthase TruA family. In terms of assembly, homodimer.

It carries out the reaction uridine(38/39/40) in tRNA = pseudouridine(38/39/40) in tRNA. Formation of pseudouridine at positions 38, 39 and 40 in the anticodon stem and loop of transfer RNAs. In Dictyoglomus thermophilum (strain ATCC 35947 / DSM 3960 / H-6-12), this protein is tRNA pseudouridine synthase A.